Consider the following 375-residue polypeptide: Succinyl-diaminopimelate desuccinylase (375 aa).

Residue His-66 coordinates Zn(2+). The active site involves Asp-68. Residue Asp-99 coordinates Zn(2+). Glu-133 functions as the Proton acceptor in the catalytic mechanism. Zn(2+) is bound by residues Glu-134, Glu-162, and His-348.

Belongs to the peptidase M20A family. DapE subfamily. Homodimer. It depends on Zn(2+) as a cofactor. Co(2+) serves as cofactor.

It carries out the reaction N-succinyl-(2S,6S)-2,6-diaminopimelate + H2O = (2S,6S)-2,6-diaminopimelate + succinate. The protein operates within amino-acid biosynthesis; L-lysine biosynthesis via DAP pathway; LL-2,6-diaminopimelate from (S)-tetrahydrodipicolinate (succinylase route): step 3/3. Catalyzes the hydrolysis of N-succinyl-L,L-diaminopimelic acid (SDAP), forming succinate and LL-2,6-diaminopimelate (DAP), an intermediate involved in the bacterial biosynthesis of lysine and meso-diaminopimelic acid, an essential component of bacterial cell walls. The protein is Succinyl-diaminopimelate desuccinylase of Shigella flexneri serotype 5b (strain 8401).